The sequence spans 127 residues: uncharacterized protein (127 aa).

This is an uncharacterized protein from Homo sapiens (Human).